Here is a 369-residue protein sequence, read N- to C-terminus: 4-hydroxy-3-methylbut-2-en-1-yl diphosphate synthase (flavodoxin) (369 aa).

Positions 270, 273, 305, and 312 each coordinate [4Fe-4S] cluster.

It belongs to the IspG family. The cofactor is [4Fe-4S] cluster.

The catalysed reaction is (2E)-4-hydroxy-3-methylbut-2-enyl diphosphate + oxidized [flavodoxin] + H2O + 2 H(+) = 2-C-methyl-D-erythritol 2,4-cyclic diphosphate + reduced [flavodoxin]. It participates in isoprenoid biosynthesis; isopentenyl diphosphate biosynthesis via DXP pathway; isopentenyl diphosphate from 1-deoxy-D-xylulose 5-phosphate: step 5/6. Converts 2C-methyl-D-erythritol 2,4-cyclodiphosphate (ME-2,4cPP) into 1-hydroxy-2-methyl-2-(E)-butenyl 4-diphosphate. The protein is 4-hydroxy-3-methylbut-2-en-1-yl diphosphate synthase (flavodoxin) of Pseudomonas savastanoi pv. phaseolicola (strain 1448A / Race 6) (Pseudomonas syringae pv. phaseolicola (strain 1448A / Race 6)).